The chain runs to 930 residues: SCY1-like protein 2 (930 aa).

In terms of domain architecture, Protein kinase spans 32-327 (FDVGRHIASG…ADQMTKIPFF (296 aa)). Residues 443-479 (DEIKNSVLPMVYRALEAPSIQIQELCLNIIPTFANLI) form an HEAT repeat. A phosphoserine mark is found at Ser658 and Ser677. Positions 658–706 (SGSESENREDGMQGKQKRGSLTLEEKQKLAKEQEQAQKLKSQQPLKPQV) are disordered. A compositionally biased stretch (basic and acidic residues) spans 680 to 694 (LEEKQKLAKEQEQAQ). The span at 695-705 (KLKSQQPLKPQ) shows a compositional bias: low complexity. A Phosphothreonine modification is found at Thr708. The segment at 895 to 930 (GMQGNPFFNPQNFAQPPPTTMTSSSSASNDLKDLFG) is disordered. Residues 897 to 922 (QGNPFFNPQNFAQPPPTTMTSSSSAS) are compositionally biased toward low complexity.

This sequence belongs to the protein kinase superfamily. In terms of assembly, interacts with clathrin and AP2B1; the interaction mediates the association with the AP-2 complex. In terms of processing, could autophosphorylate in presence of poly-L-lysine. As to expression, ubiquitously expressed.

The protein resides in the cytoplasmic vesicle. Its subcellular location is the clathrin-coated vesicle. It localises to the golgi apparatus. The protein localises to the trans-Golgi network membrane. It is found in the endosome membrane. In terms of biological role, component of the AP2-containing clathrin coat that may regulate clathrin-dependent trafficking at plasma membrane, TGN and endosomal system. A possible serine/threonine-protein kinase toward the beta2-subunit of the plasma membrane adapter complex AP2 and other proteins in presence of poly-L-lysine has not been confirmed. By regulating the expression of excitatory receptors at synapses, plays an essential role in neuronal function and signaling and in brain development. This is SCY1-like protein 2 from Mus musculus (Mouse).